A 468-amino-acid polypeptide reads, in one-letter code: tRNA threonylcarbamoyladenosine dehydratase (468 aa).

3 helical membrane passes run 15–35, 109–129, and 315–335; these read FWIA…TLEF, NSFV…NMLA, and ILPV…TYVL.

This sequence belongs to the HesA/MoeB/ThiF family.

It is found in the mitochondrion outer membrane. Its function is as follows. Catalyzes the ATP-dependent dehydration of threonylcarbamoyladenosine at position 37 (t(6)A37) to form cyclic t(6)A37 (ct(6)A37) in tRNAs that read codons beginning with adenine. The sequence is that of tRNA threonylcarbamoyladenosine dehydratase (tcd1) from Schizosaccharomyces pombe (strain 972 / ATCC 24843) (Fission yeast).